Reading from the N-terminus, the 699-residue chain is Lutropin-choriogonadotropic hormone receptor (699 aa).

The signal sequence occupies residues 1–26; the sequence is MKQRFSALQLLKLLLLLQPPLPRALR. One can recognise an LRRNT domain in the interval 27–66; the sequence is EALCPEPCNCVPDGALRCPGPTAGLTRLSLAYLPVKVIPS. At 27-363 the chain is on the extracellular side; sequence EALCPEPCNC…EDIMGYDFLR (337 aa). 3 LRR repeats span residues 96-115, 124-145, and 149-171; these read NLLN…RYIE, RLKY…TKVF, and SNFI…AFQG. N-linked (GlcNAc...) asparagine glycosylation occurs at Asn-99. 2 N-linked (GlcNAc...) asparagine glycosylation sites follow: Asn-174 and Asn-195. 3 LRR repeats span residues 175–196, 198–220, and 223–244; these read ESVT…AFNG, TLTS…AFRG, and GPKT…GLES. N-linked (GlcNAc...) asparagine glycosylation is found at Asn-291, Asn-299, and Asn-313. Tyr-331 bears the Sulfotyrosine mark. Residues 364–385 traverse the membrane as a helical segment; it reads VLIWLINILAIMGNMTVLFVLL. The Cytoplasmic segment spans residues 386–395; the sequence is TSRYKLTVPR. Residues 396-416 traverse the membrane as a helical segment; that stretch reads FLMCNLSFADFCMGLYLLLIA. Residues 417–439 lie on the Extracellular side of the membrane; sequence SVDSQTKGQYYNHAIDWQTGSGC. A disulfide bridge links Cys-439 with Cys-514. A helical membrane pass occupies residues 440–462; it reads STAGFFTVFASELSVYTLTVITL. Over 463 to 482 the chain is Cytoplasmic; the sequence is ERWHTITYAIHLDQKLRLRH. Residues 483-505 traverse the membrane as a helical segment; it reads AILIMLGGWLFSSLIAMLPLVGV. At 506–525 the chain is on the extracellular side; the sequence is SNYMKVSICFPMDVETTLSQ. The chain crosses the membrane as a helical span at residues 526–549; the sequence is VYILTILILNVVAFFIICACYIKI. At 550–570 the chain is on the cytoplasmic side; the sequence is YFAVRNPELMATNKDTKIAKK. A helical transmembrane segment spans residues 571-594; the sequence is MAILIFTDFTCMAPISFFAISAAF. The Extracellular portion of the chain corresponds to 595–605; that stretch reads KVPLITVTNSK. A helical membrane pass occupies residues 606–627; that stretch reads VLLVLFYPINSCANPFLYAIFT. Residues 628–699 lie on the Cytoplasmic side of the membrane; the sequence is KTFQRDFFLL…LLDKTRYTEC (72 aa). S-palmitoyl cysteine attachment occurs at residues Cys-643 and Cys-644.

It belongs to the G-protein coupled receptor 1 family. FSH/LSH/TSH subfamily. Post-translationally, sulfated. In terms of tissue distribution, gonadal and thyroid cells.

It is found in the cell membrane. Its function is as follows. Receptor for lutropin-choriogonadotropic hormone. The activity of this receptor is mediated by G proteins which activate adenylate cyclase. The protein is Lutropin-choriogonadotropic hormone receptor (LHCGR) of Homo sapiens (Human).